Consider the following 423-residue polypeptide: D-tagatose-1,6-bisphosphate aldolase subunit GatZ (423 aa).

The protein belongs to the GatZ/KbaZ family. GatZ subfamily. Forms a complex with GatY.

It functions in the pathway carbohydrate metabolism; D-tagatose 6-phosphate degradation; D-glyceraldehyde 3-phosphate and glycerone phosphate from D-tagatose 6-phosphate: step 2/2. Its function is as follows. Component of the tagatose-1,6-bisphosphate aldolase GatYZ that is required for full activity and stability of the Y subunit. Could have a chaperone-like function for the proper and stable folding of GatY. When expressed alone, GatZ does not show any aldolase activity. Is involved in the catabolism of galactitol. The protein is D-tagatose-1,6-bisphosphate aldolase subunit GatZ of Salmonella dublin (strain CT_02021853).